Reading from the N-terminus, the 333-residue chain is CMP-N-acetylneuraminate-beta-galactosamide-alpha-2,3-sialyltransferase 4 (333 aa).

Topologically, residues 1–8 (MTSKSHWK) are cytoplasmic. A helical; Signal-anchor for type II membrane protein transmembrane segment spans residues 9 to 26 (LLALALVLVVVMVWYSIS). Residues 27–333 (REDRYIEFFY…MGAVKNLTYF (307 aa)) are Lumenal-facing. N-linked (GlcNAc...) asparagine glycans are attached at residues Asn-61, Asn-131, Asn-310, and Asn-329. Cys-120 and Cys-273 are oxidised to a cystine.

This sequence belongs to the glycosyltransferase 29 family. In terms of tissue distribution, broadly expressed among tissues with highest levels in the small intestine and colon.

The protein localises to the golgi apparatus. It localises to the golgi stack membrane. The catalysed reaction is a beta-D-galactosyl-(1-&gt;3)-N-acetyl-beta-D-galactosaminyl derivative + CMP-N-acetyl-beta-neuraminate = an N-acetyl-alpha-neuraminyl-(2-&gt;3)-beta-D-galactosyl-(1-&gt;3)-N-acetyl-beta-D-galactosaminyl derivative + CMP + H(+). It carries out the reaction a beta-D-galactosyl-(1-&gt;3)-N-acetyl-alpha-D-galactosaminyl derivative + CMP-N-acetyl-beta-neuraminate = an N-acetyl-alpha-neuraminyl-(2-&gt;3)-beta-D-galactosyl-(1-&gt;3)-N-acetyl-alpha-D-galactosaminyl derivative + CMP + H(+). The enzyme catalyses a beta-D-galactosyl-(1-&gt;4)-N-acetyl-beta-D-glucosaminyl derivative + CMP-N-acetyl-beta-neuraminate = an N-acetyl-alpha-neuraminyl-(2-&gt;3)-beta-D-galactosyl-(1-&gt;4)-N-acetyl-beta-D-glucosaminyl derivative + CMP + H(+). It catalyses the reaction a ganglioside GM1 (d18:1(4E)) + CMP-N-acetyl-beta-neuraminate = a ganglioside GD1a (d18:1(4E)) + CMP + H(+). The catalysed reaction is a ganglioside GA1 (d18:1(4E)) + CMP-N-acetyl-beta-neuraminate = a ganglioside GM1b (d18:1(4E)) + CMP + H(+). It carries out the reaction a ganglioside GT1c (d18:1(4E)) + CMP-N-acetyl-beta-neuraminate = a ganglioside GQ1c (d18:1(4E)) + CMP + H(+). The enzyme catalyses a neolactoside nLc4Cer + CMP-N-acetyl-beta-neuraminate = a neolactoside IV(3)-alpha-NeuAc-nLc4Cer + CMP + H(+). It catalyses the reaction a neolactoside nLc4Cer(d18:1(4E)) + CMP-N-acetyl-beta-neuraminate = a neolactoside IV(3)-alpha-NeuAc-nLc4Cer(d18:1(4E)) + CMP + H(+). The protein operates within protein modification; protein glycosylation. A beta-galactoside alpha2-3 sialyltransferase involved in terminal sialylation of glycoproteins and glycolipids. Catalyzes the transfer of sialic acid (N-acetyl-neuraminic acid; Neu5Ac) from the nucleotide sugar donor CMP-Neu5Ac onto acceptor Galbeta-(1-&gt;3)-GalNAc- and Galbeta-(1-&gt;4)-GlcNAc-terminated glycoconjugates through an alpha2-3 linkage. Plays a major role in hemostasis. Responsible for sialylation of plasma VWF/von Willebrand factor, preventing its recognition by asialoglycoprotein receptors (ASGPR) and subsequent clearance. Regulates ASGPR-mediated clearance of platelets. Participates in the biosynthesis of the sialyl Lewis X epitopes, both on O- and N-glycans, which are recognized by SELE/E-selectin, SELP/P-selectin and SELL/L-selectin. Essential for selectin-mediated rolling and adhesion of leukocytes during extravasation. Contributes to adhesion and transendothelial migration of neutrophils likely through terminal sialylation of CXCR2. In glycosphingolipid biosynthesis, sialylates GM1 and GA1 gangliosides to form GD1a and GM1b, respectively. Metabolizes brain c-series ganglioside GT1c forming GQ1c. Synthesizes ganglioside LM1 (IV3Neu5Ac-nLc4Cer), a major structural component of peripheral nerve myelin. In Mus musculus (Mouse), this protein is CMP-N-acetylneuraminate-beta-galactosamide-alpha-2,3-sialyltransferase 4 (St3gal4).